The chain runs to 1318 residues: Putative tetratricopeptide repeat protein 41 (1318 aa).

TPR repeat units lie at residues 399–432 (TQLETDILNEDSDGLVFSFLVEVFIASISLKPCI), 653–684 (WVQEKPNGLLYFWHQSLSAVEHKLLGVITPVE), 817–850 (CRLMFFIGSFLKFMGKTNEAEELFLSVEDMLVQS), 858–891 (LKVQNAIGELYLETGMTQEGFQYFQKAWSSMLRL), 991–1027 (MEFLADLLFFPQRDSKKSQRKQVLKYYKQVIKIKENA), and 1045–1082 (SDTLCKLAGHLLASDSCHHVMIEAVGYLYRSVDLRVIH).

It localises to the cytoplasm. This Homo sapiens (Human) protein is Putative tetratricopeptide repeat protein 41.